We begin with the raw amino-acid sequence, 270 residues long: Monocyte to macrophage differentiation factor 2 (270 aa).

The Cytoplasmic segment spans residues 1–38 (MFAPRLLDFQKTKYARFMNHRVPAHKRYQPTEYEHAAN). The chain crosses the membrane as a helical span at residues 39–59 (CATHAFWIIPSILGSSNLYFL). The Lumenal segment spans residues 60 to 65 (SDDDWE). Residues 66 to 86 (TISAWIYGLGLCGLFVVSTVF) traverse the membrane as a helical segment. Over 87–102 (HTISWKKSHLRMVEHC) the chain is Cytoplasmic. The chain crosses the membrane as a helical span at residues 103–123 (LHMFDRMVIYFFIAASYAPWL). The Lumenal segment spans residues 124–132 (NLRELGPWA). The helical transmembrane segment at 133-153 (SHMRWLVWIMASVGTIYVFFF) threads the bilayer. Over 154–182 (HERTGSCVQFLRGEACPKAGTACLPARYK) the chain is Cytoplasmic. Residues 183–203 (LVELLCYVVMGFFPALVILSM) form a helical membrane-spanning segment. Over 204-205 (PN) the chain is Lumenal. Residues 206–226 (TEGIWELVTGGVFYCLGMVFF) traverse the membrane as a helical segment. Residues 227-233 (KSDGRIP) lie on the Cytoplasmic side of the membrane. The chain crosses the membrane as a helical span at residues 234 to 254 (FAHAIWHLFVAFGAGTHYYAI). The Lumenal segment spans residues 255-270 (WRYLYLPSTLQTKVSK).

Belongs to the ADIPOR family. Shows restricted expression with highest levels in brain and testis.

The protein localises to the golgi apparatus membrane. This is Monocyte to macrophage differentiation factor 2 from Homo sapiens (Human).